Reading from the N-terminus, the 300-residue chain is Ribosomal RNA small subunit methyltransferase A (300 aa).

S-adenosyl-L-methionine is bound by residues asparagine 36, valine 38, glycine 63, glutamate 84, aspartate 113, and asparagine 131.

It belongs to the class I-like SAM-binding methyltransferase superfamily. rRNA adenine N(6)-methyltransferase family. RsmA subfamily.

Its subcellular location is the cytoplasm. It carries out the reaction adenosine(1518)/adenosine(1519) in 16S rRNA + 4 S-adenosyl-L-methionine = N(6)-dimethyladenosine(1518)/N(6)-dimethyladenosine(1519) in 16S rRNA + 4 S-adenosyl-L-homocysteine + 4 H(+). Functionally, specifically dimethylates two adjacent adenosines (A1518 and A1519) in the loop of a conserved hairpin near the 3'-end of 16S rRNA in the 30S particle. May play a critical role in biogenesis of 30S subunits. This chain is Ribosomal RNA small subunit methyltransferase A, found in Kineococcus radiotolerans (strain ATCC BAA-149 / DSM 14245 / SRS30216).